The following is a 406-amino-acid chain: Ubiquitin-associated domain-containing protein 1 (406 aa).

One can recognise a Ubiquitin-like domain in the interval 14 to 98 (LRLHICSLDG…LLLVKKRAPP (85 aa)). Residues 95 to 122 (RAPPPTPKMAEVSADEKRKQDQKAPDKD) form a disordered region. A compositionally biased stretch (basic and acidic residues) spans 108 to 122 (ADEKRKQDQKAPDKD). Positions 186 to 231 (EDDEDRVDEVALRQLTEMGFPESRAVKALRLNHMSVTQAMEWLIEH) constitute a UBA 1 domain. The span at 238-257 (DAPLPCENSSEAAGGLATGE) shows a compositional bias: low complexity. Positions 238–272 (DAPLPCENSSEAAGGLATGEAETKPTLGAGAEDPK) are disordered. Residues 289–329 (RPDPRAVIALMEMGFDEKEVIDALRVNNNQQDAACEWLLGD) enclose the UBA 2 domain. Residues 354–393 (NPVVQLGLTNPKTLLAFEDMLENPLNSTQWMNDPETGPVM) enclose the STI1 domain.

In terms of assembly, component of the KPC complex.

Its subcellular location is the cytoplasm. It functions in the pathway protein modification; protein ubiquitination. Non-catalytic component of the KPC complex, a E3 ubiquitin-protein ligase complex that mediates polyubiquitination of target proteins, such as CDKN1B and NFKB1. Within the KPC complex, UBAC1 acts as an adapter that promotes the transfer of target proteins that have been polyubiquitinated by RNF123/KPC1 to the 26S proteasome. The protein is Ubiquitin-associated domain-containing protein 1 (ubac1) of Xenopus tropicalis (Western clawed frog).